Reading from the N-terminus, the 285-residue chain is ATP phosphoribosyltransferase (285 aa).

It belongs to the ATP phosphoribosyltransferase family. Long subfamily. It depends on Mg(2+) as a cofactor.

Its subcellular location is the cytoplasm. The enzyme catalyses 1-(5-phospho-beta-D-ribosyl)-ATP + diphosphate = 5-phospho-alpha-D-ribose 1-diphosphate + ATP. Its pathway is amino-acid biosynthesis; L-histidine biosynthesis; L-histidine from 5-phospho-alpha-D-ribose 1-diphosphate: step 1/9. Its activity is regulated as follows. Feedback inhibited by histidine. Functionally, catalyzes the condensation of ATP and 5-phosphoribose 1-diphosphate to form N'-(5'-phosphoribosyl)-ATP (PR-ATP). Has a crucial role in the pathway because the rate of histidine biosynthesis seems to be controlled primarily by regulation of HisG enzymatic activity. The protein is ATP phosphoribosyltransferase of Methanocella arvoryzae (strain DSM 22066 / NBRC 105507 / MRE50).